The following is a 208-amino-acid chain: Small ribosomal subunit protein uS4 (208 aa).

Residues 29 to 48 (MERRPYGPGQHGRARRKQDS) form a disordered region. Residues 95–155 (QRLDALVLRA…ERSEKMVPFQ (61 aa)) enclose the S4 RNA-binding domain.

The protein belongs to the universal ribosomal protein uS4 family. Part of the 30S ribosomal subunit. Contacts protein S5. The interaction surface between S4 and S5 is involved in control of translational fidelity.

Functionally, one of the primary rRNA binding proteins, it binds directly to 16S rRNA where it nucleates assembly of the body of the 30S subunit. With S5 and S12 plays an important role in translational accuracy. The sequence is that of Small ribosomal subunit protein uS4 from Micrococcus luteus (strain ATCC 4698 / DSM 20030 / JCM 1464 / CCM 169 / CCUG 5858 / IAM 1056 / NBRC 3333 / NCIMB 9278 / NCTC 2665 / VKM Ac-2230) (Micrococcus lysodeikticus).